The sequence spans 724 residues: 1,4-alpha-glucan branching enzyme GlgB 1 (724 aa).

Asp-403 acts as the Nucleophile in catalysis. The active-site Proton donor is Glu-456.

The protein belongs to the glycosyl hydrolase 13 family. GlgB subfamily. In terms of assembly, monomer.

The catalysed reaction is Transfers a segment of a (1-&gt;4)-alpha-D-glucan chain to a primary hydroxy group in a similar glucan chain.. It functions in the pathway glycan biosynthesis; glycogen biosynthesis. Catalyzes the formation of the alpha-1,6-glucosidic linkages in glycogen by scission of a 1,4-alpha-linked oligosaccharide from growing alpha-1,4-glucan chains and the subsequent attachment of the oligosaccharide to the alpha-1,6 position. In Xanthomonas axonopodis pv. citri (strain 306), this protein is 1,4-alpha-glucan branching enzyme GlgB 1 (glgB1).